The following is a 281-amino-acid chain: Histidine biosynthesis bifunctional protein hisIE, chloroplastic (281 aa).

A chloroplast-targeting transit peptide spans 1–50 (MAVSYNALAQSLARSSCFIPKPYSFRDTKLRSRSNVVFACNDNKNIALQA). The tract at residues 51 to 178 (KVDNLLDRIK…NKLALTTLYS (128 aa)) is phosphoribosyl-AMP cyclohydrolase. The segment at 179–281 (LESIISKRKE…GIEEKQNRTK (103 aa)) is phosphoribosyl-ATP pyrophosphohydrolase.

It in the N-terminal section; belongs to the PRA-CH family. The protein in the C-terminal section; belongs to the PRA-PH family. As to expression, ubiquitously expressed throughout development.

It is found in the plastid. The protein resides in the chloroplast. It carries out the reaction 1-(5-phospho-beta-D-ribosyl)-ATP + H2O = 1-(5-phospho-beta-D-ribosyl)-5'-AMP + diphosphate + H(+). The catalysed reaction is 1-(5-phospho-beta-D-ribosyl)-5'-AMP + H2O = 1-(5-phospho-beta-D-ribosyl)-5-[(5-phospho-beta-D-ribosylamino)methylideneamino]imidazole-4-carboxamide. It participates in amino-acid biosynthesis; L-histidine biosynthesis; L-histidine from 5-phospho-alpha-D-ribose 1-diphosphate: step 2/9. It functions in the pathway amino-acid biosynthesis; L-histidine biosynthesis; L-histidine from 5-phospho-alpha-D-ribose 1-diphosphate: step 3/9. This Arabidopsis thaliana (Mouse-ear cress) protein is Histidine biosynthesis bifunctional protein hisIE, chloroplastic (HISN2).